A 443-amino-acid chain; its full sequence is Serine/threonine-protein phosphatase 2A 55 kDa regulatory subunit B beta isoform (443 aa).

WD repeat units follow at residues 22–61 (TEADIISAVEFNHTGELLATGDKGGRVVIFQREQESKNQV), 87–128 (EIEE…KRPE), 171–209 (AHTYHINSISVNSDYETYMSADDLRINLWNFEITNQSFN), and 220–260 (ELTE…CVTG). Serine 275 carries the phosphoserine modification. WD repeat units lie at residues 279–317 (KLSSSISDVKFSQQWEDIMTRDYLTVKVWDLNMENRPIE), 334–375 (ENDC…DVTL), and 410–442 (DFSKKILHTAWHPSENIIAVAATNNLYIFQDKV). At threonine 298 the chain carries Phosphothreonine.

This sequence belongs to the phosphatase 2A regulatory subunit B family. As to quaternary structure, PP2A consists of a common heterodimeric core enzyme, composed of a 36 kDa catalytic subunit (subunit C) and a 65 kDa constant regulatory subunit (PR65 or subunit A), that associates with a variety of regulatory subunits. Proteins that associate with the core dimer include three families of regulatory subunits B (the R2/B/PR55/B55, R3/B''/PR72/PR130/PR59 and R5/B'/B56 families), the 48 kDa variable regulatory subunit, viral proteins, and cell signaling molecules. Interacts with TOMM22. Interacts with IER5 (via N- and C-terminal regions). In terms of tissue distribution, brain.

Its subcellular location is the cytoplasm. The protein resides in the cytoskeleton. It localises to the membrane. The B regulatory subunit might modulate substrate selectivity and catalytic activity, and might also direct the localization of the catalytic enzyme to a particular subcellular compartment. The sequence is that of Serine/threonine-protein phosphatase 2A 55 kDa regulatory subunit B beta isoform (PPP2R2B) from Sus scrofa (Pig).